The sequence spans 189 residues: Probable nicotinate-nucleotide adenylyltransferase (189 aa).

The protein belongs to the NadD family.

It catalyses the reaction nicotinate beta-D-ribonucleotide + ATP + H(+) = deamido-NAD(+) + diphosphate. It participates in cofactor biosynthesis; NAD(+) biosynthesis; deamido-NAD(+) from nicotinate D-ribonucleotide: step 1/1. In terms of biological role, catalyzes the reversible adenylation of nicotinate mononucleotide (NaMN) to nicotinic acid adenine dinucleotide (NaAD). The sequence is that of Probable nicotinate-nucleotide adenylyltransferase from Caulobacter sp. (strain K31).